We begin with the raw amino-acid sequence, 95 residues long: Integration host factor subunit beta (95 aa).

This sequence belongs to the bacterial histone-like protein family. In terms of assembly, heterodimer of an alpha and a beta chain.

Functionally, this protein is one of the two subunits of integration host factor, a specific DNA-binding protein that functions in genetic recombination as well as in transcriptional and translational control. The chain is Integration host factor subunit beta from Shewanella loihica (strain ATCC BAA-1088 / PV-4).